An 843-amino-acid chain; its full sequence is Translation initiation factor IF-2 (843 aa).

Disordered stretches follow at residues 50-72 and 94-260; these read LKSSHKSKAEEPRKITLQRKTTS and QRSP…TGPV. Residues 96–135 are compositionally biased toward basic and acidic residues; sequence SPEEIQAEQKREQDERRAAENAARDKVDADVRQRNEEQAR. Residues 139–173 show a composition bias toward low complexity; it reads TATAAAAPAAKAEPAPAAAAPAPAPVVADAPASED. Composition is skewed to basic and acidic residues over residues 174 to 203 and 227 to 236; these read AAARAAERKKDETRRNESRTRDDDRRRGEA and TTDEESDGAR. Positions 237 to 250 are enriched in basic residues; sequence RGRGGKGKLKKRNQ. The tr-type G domain occupies 343-516; that stretch reads SRAPVVTVMG…EVLELTATPT (174 aa). A G1 region spans residues 352 to 359; it reads GHVDHGKT. 352–359 provides a ligand contact to GTP; sequence GHVDHGKT. Residues 377-381 are G2; sequence GITQH. The interval 398–401 is G3; that stretch reads DTPG. Residues 398–402 and 452–455 contribute to the GTP site; these read DTPGH and NKID. The segment at 452 to 455 is G4; sequence NKID. Positions 488–490 are G5; sequence SAK.

This sequence belongs to the TRAFAC class translation factor GTPase superfamily. Classic translation factor GTPase family. IF-2 subfamily.

The protein resides in the cytoplasm. In terms of biological role, one of the essential components for the initiation of protein synthesis. Protects formylmethionyl-tRNA from spontaneous hydrolysis and promotes its binding to the 30S ribosomal subunits. Also involved in the hydrolysis of GTP during the formation of the 70S ribosomal complex. This is Translation initiation factor IF-2 from Pseudomonas putida (strain W619).